A 562-amino-acid chain; its full sequence is Probable sesquiterpene synthase (562 aa).

Mg(2+) contacts are provided by Asp315, Asp319, and Glu467. The DDXXD motif motif lies at 315–319 (DDIYD).

This sequence belongs to the terpene synthase family. Tpsa subfamily. Mg(2+) serves as cofactor. Mn(2+) is required as a cofactor.

Sesquiterpene synthase. This Santalum murrayanum (Bitter quandong) protein is Probable sesquiterpene synthase (STPS).